The chain runs to 334 residues: MRFVDEVVIKLQAGKGGNGCVSFRREKYVPRGGPDGGDGGNGGSIYLKADENVNTLIDYRYKREYYAENGRPGEGRNCYGKAGEDLYLVVPVGTSVFDIDTNKKIGEVLQHGQTFKLVSGGKRGIGNTHFKSSTNQAPRKFTLGEEGEYKEVRLELNLLADVALLGLPNAGKSTLIRSVSEATPKVADYPFTTMYPHLGVVKVGVDSFVMADIPGVIEGAAEGAGLGLRFLKHLTRARCVLHVVDICPFSESDPVENYFAVEKELEKYSQELFDKPRFLVINKIDLLADKVEQKCQEFVEQIGYQGNYYTISAAMKKGTDELAKKLNEFLQKQE.

The Obg domain maps to 1–159 (MRFVDEVVIK…KEVRLELNLL (159 aa)). Residues 160–331 (ADVALLGLPN…LAKKLNEFLQ (172 aa)) enclose the OBG-type G domain. GTP-binding positions include 166–173 (GLPNAGKS), 191–195 (FTTMY), 212–215 (DIPG), 282–285 (NKID), and 312–314 (SAA). Mg(2+)-binding residues include Ser173 and Thr193.

This sequence belongs to the TRAFAC class OBG-HflX-like GTPase superfamily. OBG GTPase family. Monomer. Mg(2+) serves as cofactor.

The protein localises to the cytoplasm. In terms of biological role, an essential GTPase which binds GTP, GDP and possibly (p)ppGpp with moderate affinity, with high nucleotide exchange rates and a fairly low GTP hydrolysis rate. Plays a role in control of the cell cycle, stress response, ribosome biogenesis and in those bacteria that undergo differentiation, in morphogenesis control. The sequence is that of GTPase Obg from Francisella tularensis subsp. mediasiatica (strain FSC147).